A 653-amino-acid chain; its full sequence is tRNA 5-methylaminomethyl-2-thiouridine biosynthesis bifunctional protein MnmC (653 aa).

A tRNA (mnm(5)s(2)U34)-methyltransferase region spans residues 1-236 (MPDRLVPATL…KFAMLVGEYA (236 aa)). Residues 260-653 (IGAGLAGCAL…IRALRGRKLG (394 aa)) form an FAD-dependent cmnm(5)s(2)U34 oxidoreductase region.

In the N-terminal section; belongs to the methyltransferase superfamily. tRNA (mnm(5)s(2)U34)-methyltransferase family. This sequence in the C-terminal section; belongs to the DAO family. Requires FAD as cofactor.

The protein resides in the cytoplasm. It catalyses the reaction 5-aminomethyl-2-thiouridine(34) in tRNA + S-adenosyl-L-methionine = 5-methylaminomethyl-2-thiouridine(34) in tRNA + S-adenosyl-L-homocysteine + H(+). In terms of biological role, catalyzes the last two steps in the biosynthesis of 5-methylaminomethyl-2-thiouridine (mnm(5)s(2)U) at the wobble position (U34) in tRNA. Catalyzes the FAD-dependent demodification of cmnm(5)s(2)U34 to nm(5)s(2)U34, followed by the transfer of a methyl group from S-adenosyl-L-methionine to nm(5)s(2)U34, to form mnm(5)s(2)U34. The polypeptide is tRNA 5-methylaminomethyl-2-thiouridine biosynthesis bifunctional protein MnmC (Burkholderia vietnamiensis (strain G4 / LMG 22486) (Burkholderia cepacia (strain R1808))).